We begin with the raw amino-acid sequence, 151 residues long: Large ribosomal subunit protein bL9 (151 aa).

Belongs to the bacterial ribosomal protein bL9 family.

In terms of biological role, binds to the 23S rRNA. The chain is Large ribosomal subunit protein bL9 from Francisella tularensis subsp. novicida (strain U112).